The chain runs to 241 residues: Proteasome subunit alpha (241 aa).

It belongs to the peptidase T1A family. The 20S proteasome core is composed of 14 alpha and 14 beta subunits that assemble into four stacked heptameric rings, resulting in a barrel-shaped structure. The two inner rings, each composed of seven catalytic beta subunits, are sandwiched by two outer rings, each composed of seven alpha subunits. The catalytic chamber with the active sites is on the inside of the barrel. Has a gated structure, the ends of the cylinder being occluded by the N-termini of the alpha-subunits. Is capped at one or both ends by the proteasome regulatory ATPase, PAN.

The protein localises to the cytoplasm. The formation of the proteasomal ATPase PAN-20S proteasome complex, via the docking of the C-termini of PAN into the intersubunit pockets in the alpha-rings, triggers opening of the gate for substrate entry. Interconversion between the open-gate and close-gate conformations leads to a dynamic regulation of the 20S proteasome proteolysis activity. Component of the proteasome core, a large protease complex with broad specificity involved in protein degradation. This Saccharolobus islandicus (strain M.16.4 / Kamchatka #3) (Sulfolobus islandicus) protein is Proteasome subunit alpha.